A 256-amino-acid chain; its full sequence is Small ribosomal subunit protein eS1A (256 aa).

An N-acetylalanine; partial modification is found at Ala-2.

Belongs to the eukaryotic ribosomal protein eS1 family. In terms of assembly, component of the small ribosomal subunit. Mature ribosomes consist of a small (40S) and a large (60S) subunit. The 40S subunit contains about 33 different proteins and 1 molecule of RNA (18S). The 60S subunit contains about 49 different proteins and 3 molecules of RNA (25S, 5.8S and 5S).

It localises to the cytoplasm. This Debaryomyces hansenii (strain ATCC 36239 / CBS 767 / BCRC 21394 / JCM 1990 / NBRC 0083 / IGC 2968) (Yeast) protein is Small ribosomal subunit protein eS1A.